A 101-amino-acid polypeptide reads, in one-letter code: UPF0751 protein DSY3086 (101 aa).

Belongs to the UPF0751 family.

The polypeptide is UPF0751 protein DSY3086 (Desulfitobacterium hafniense (strain Y51)).